A 48-amino-acid polypeptide reads, in one-letter code: ATP synthase protein 8 (48 aa).

Residues 12–32 (QLTYGLLLITVLLILFSQFFL) form a helical membrane-spanning segment.

This sequence belongs to the ATPase protein 8 family. In terms of assembly, F-type ATPases have 2 components, CF(1) - the catalytic core - and CF(0) - the membrane proton channel.

It localises to the mitochondrion membrane. Functionally, mitochondrial membrane ATP synthase (F(1)F(0) ATP synthase or Complex V) produces ATP from ADP in the presence of a proton gradient across the membrane which is generated by electron transport complexes of the respiratory chain. F-type ATPases consist of two structural domains, F(1) - containing the extramembraneous catalytic core and F(0) - containing the membrane proton channel, linked together by a central stalk and a peripheral stalk. During catalysis, ATP synthesis in the catalytic domain of F(1) is coupled via a rotary mechanism of the central stalk subunits to proton translocation. Part of the complex F(0) domain. Minor subunit located with subunit a in the membrane. In Candida glabrata (strain ATCC 2001 / BCRC 20586 / JCM 3761 / NBRC 0622 / NRRL Y-65 / CBS 138) (Yeast), this protein is ATP synthase protein 8 (ATP8).